An 897-amino-acid chain; its full sequence is MRPMRIFLNDDRHVMAKHSVVYPTQEELEAVQNMVSHTERALKAVSDWIDQQEKDCSGEQEQPMAEETETTEEGKDSEMKTGENPTRTLRGVMRVGLVAKGLLLKGDLDLELVLLCRDKPTISLLKRVADNLVLQFETVSEDKYEVIQNIREALIVVKSTKEPPLTLNIRLTSPLVREEMEKLSAGETLTVSDPPDVLDRHKCLAALASLRHAKWFQARANGLKSCVIVIRVLRDLCTRVPTWEPLRGWPLELLCEKAIGTANRPMGAGEALRRVLECLSSGILMPDGSGLYDPCEKDASDALEHLERQQREDITQSAQHALRLAAFGQLHKVLGMDPLPSKMPKKTKVETPVIDYTVQIPPSTTYAMPPLKRPIEEDGDDKSPSKKKKKIQKKDEKSEPPQVMNALMRLNQLKPGLQYKLISQTGPVHAPVFTMSVEVDDKTFEASGPSKKTAKLHVAVKVLQDMGLPTGMEEKEEGTDESEQKPVVQTPAQPDDSAEVDSAALDQAESAKQQGPILTKHGKNPVMELNEKRRGLKYELISETGGSHDKRFVMEVEVDGVKFQGSGSNKKVAKAYAALSALEKLFPDYTMYTEAPKKKRPPMMPRGGPKFAGKHNQGFGMMYSEVPPPQAMRGRGRGGMNRGRGRGRGGFGGGYMNSGGYGGGYGGNYNYQTSATAGYSQFYSNGGASGNAGGGGAGTGGYSSYYQGDSYSAPTPPKPFVNKKPPPPQQQQQQQPPPQHASNPPKPSYNQGYQGHQGGQQQQQQQQQQQTYNQNQYSNYGPPQKQKGGYNQGAQGAGSGGSYNYSNSYTGGTAPLGTAVERVQEGEAAALTQRQALVTTQAHTPAMVEPAVLRRTKVTRSLITIKVPPDRTTVALQIITSSLREELGVTAGIQNTT.

One can recognise a DZF domain in the interval 5-379 (RIFLNDDRHV…PLKRPIEEDG (375 aa)). Disordered stretches follow at residues 52-85 (QEKD…GENP), 364-403 (TTYA…PPQV), and 466-502 (MGLP…EVDS). 2 stretches are compositionally biased toward basic and acidic residues: residues 72 to 81 (EEGKDSEMKT) and 373 to 384 (RPIEEDGDDKSP). A Bipartite nuclear localization signal motif is present at residues 372–390 (KRPIEEDGDDKSPSKKKKK). DRBM domains are found at residues 399-468 (EPPQ…DMGL) and 521-587 (HGKN…KLFP). Disordered stretches follow at residues 627–650 (PPPQ…GRGG) and 708–797 (GDSY…AQGA). Residues 637 to 650 (RGGMNRGRGRGRGG) are compositionally biased toward gly residues. Residues 714-747 (PTPPKPFVNKKPPPPQQQQQQQPPPQHASNPPKP) are compositionally biased toward pro residues. Over residues 749 to 794 (YNQGYQGHQGGQQQQQQQQQQQTYNQNQYSNYGPPQKQKGGYNQGA) the composition is skewed to low complexity.

In terms of assembly, a component of a ybx2/frgy2-containing mRNA-ribonucleoprotein (mRNP) complex. Also a component of the CCAAT box transcription factor (CBTF) complex. Post-translationally, phosphorylated. Phosphorylation affects nuclear translocation. In terms of processing, methylated by protein arginine N-methyltransferase 1 (prmt1b) in the RGG-rich domain. Methylation decreases DNA-binding and thereby decreases transcription of the gata2 gene, but does not regulate dsRNA binding or subcellular localization. As to expression, expressed mainly in the ectoderm (at protein level).

It localises to the nucleus. Its subcellular location is the cytoplasm. Its function is as follows. RNA-binding protein that plays an essential role in the biogenesis of circular RNAs (circRNAs) which are produced by back-splicing circularization of pre-mRNAs. Within the nucleus, promotes circRNAs processing by stabilizing the regulatory elements residing in the flanking introns of the circularized exons. Plays thereby a role in the back-splicing of a subset of circRNAs. As a consequence, participates in a wide range of transcriptional and post-transcriptional processes. Binds to poly-U elements and AU-rich elements (AREs) in the 3'-UTR of target mRNAs. Upon viral infection, ILF3 accumulates in the cytoplasm and participates in the innate antiviral response. Mechanistically, ILF3 becomes phosphorylated and activated by the double-stranded RNA-activated protein kinase/PKR which releases ILF3 from cellular mature circRNAs. In turn, unbound ILF3 molecules are able to interact with and thus inhibit viral mRNAs. Has a cytoplasmic role early in development as part of a ribonucleoprotein (mRNP) complex which may regulate mRNA transport and/or translation. Following nuclear localization at the mid-blastula transition, acts as a transcription factor and binds the 5'-CCAAT-3' promoter sequence to regulate transcription of the gata2 gene as a subunit of the CCAAT box transcription factor (CBTF). Its role as an mRNP component negatively regulates its activity as a transcription factor by precluding its nuclear localization. This is Interleukin enhancer-binding factor 3-A (ilf3-a) from Xenopus laevis (African clawed frog).